The sequence spans 697 residues: Polyribonucleotide nucleotidyltransferase (697 aa).

2 residues coordinate Mg(2+): Asp-486 and Asp-492. The 60-residue stretch at Pro-553–Ile-612 folds into the KH domain. Residues Gly-622–Lys-690 enclose the S1 motif domain.

It belongs to the polyribonucleotide nucleotidyltransferase family. In terms of assembly, component of the RNA degradosome, which is a multiprotein complex involved in RNA processing and mRNA degradation. Requires Mg(2+) as cofactor.

Its subcellular location is the cytoplasm. The enzyme catalyses RNA(n+1) + phosphate = RNA(n) + a ribonucleoside 5'-diphosphate. Functionally, involved in mRNA degradation. Catalyzes the phosphorolysis of single-stranded polyribonucleotides processively in the 3'- to 5'-direction. The sequence is that of Polyribonucleotide nucleotidyltransferase from Baumannia cicadellinicola subsp. Homalodisca coagulata.